Consider the following 189-residue polypeptide: Elongation factor P (189 aa).

Residue Lys34 is modified to N6-(3,6-diaminohexanoyl)-5-hydroxylysine.

Belongs to the elongation factor P family. In terms of processing, may be beta-lysylated on the epsilon-amino group of Lys-34 by the combined action of EpmA and EpmB, and then hydroxylated on the C5 position of the same residue by EpmC (if this protein is present). Lysylation is critical for the stimulatory effect of EF-P on peptide-bond formation. The lysylation moiety may extend toward the peptidyltransferase center and stabilize the terminal 3-CCA end of the tRNA. Hydroxylation of the C5 position on Lys-34 may allow additional potential stabilizing hydrogen-bond interactions with the P-tRNA.

The protein localises to the cytoplasm. It participates in protein biosynthesis; polypeptide chain elongation. Functionally, involved in peptide bond synthesis. Alleviates ribosome stalling that occurs when 3 or more consecutive Pro residues or the sequence PPG is present in a protein, possibly by augmenting the peptidyl transferase activity of the ribosome. Modification of Lys-34 is required for alleviation. The protein is Elongation factor P of Buchnera aphidicola subsp. Baizongia pistaciae (strain Bp).